Here is a 249-residue protein sequence, read N- to C-terminus: DNA repair protein RecO (249 aa).

Belongs to the RecO family.

In terms of biological role, involved in DNA repair and RecF pathway recombination. The sequence is that of DNA repair protein RecO from Leptospira biflexa serovar Patoc (strain Patoc 1 / Ames).